Here is a 338-residue protein sequence, read N- to C-terminus: Holliday junction branch migration complex subunit RuvB (338 aa).

A large ATPase domain (RuvB-L) region spans residues 1–181 (MTRTITPSIT…FGVISRLEFY (181 aa)). ATP is bound by residues L20, R21, G62, K65, T66, T67, 128–130 (EDF), R171, Y181, and R218. T66 is a Mg(2+) binding site. The interval 182 to 252 (TDEELAFIIT…VVQDALALLE (71 aa)) is small ATPAse domain (RuvB-S). The segment at 255–338 (EMGFDQMDRM…VPEPPQGKLF (84 aa)) is head domain (RuvB-H). Residues R310 and R315 each contribute to the DNA site.

Belongs to the RuvB family. As to quaternary structure, homohexamer. Forms an RuvA(8)-RuvB(12)-Holliday junction (HJ) complex. HJ DNA is sandwiched between 2 RuvA tetramers; dsDNA enters through RuvA and exits via RuvB. An RuvB hexamer assembles on each DNA strand where it exits the tetramer. Each RuvB hexamer is contacted by two RuvA subunits (via domain III) on 2 adjacent RuvB subunits; this complex drives branch migration. In the full resolvosome a probable DNA-RuvA(4)-RuvB(12)-RuvC(2) complex forms which resolves the HJ.

The protein resides in the cytoplasm. It carries out the reaction ATP + H2O = ADP + phosphate + H(+). Functionally, the RuvA-RuvB-RuvC complex processes Holliday junction (HJ) DNA during genetic recombination and DNA repair, while the RuvA-RuvB complex plays an important role in the rescue of blocked DNA replication forks via replication fork reversal (RFR). RuvA specifically binds to HJ cruciform DNA, conferring on it an open structure. The RuvB hexamer acts as an ATP-dependent pump, pulling dsDNA into and through the RuvAB complex. RuvB forms 2 homohexamers on either side of HJ DNA bound by 1 or 2 RuvA tetramers; 4 subunits per hexamer contact DNA at a time. Coordinated motions by a converter formed by DNA-disengaged RuvB subunits stimulates ATP hydrolysis and nucleotide exchange. Immobilization of the converter enables RuvB to convert the ATP-contained energy into a lever motion, pulling 2 nucleotides of DNA out of the RuvA tetramer per ATP hydrolyzed, thus driving DNA branch migration. The RuvB motors rotate together with the DNA substrate, which together with the progressing nucleotide cycle form the mechanistic basis for DNA recombination by continuous HJ branch migration. Branch migration allows RuvC to scan DNA until it finds its consensus sequence, where it cleaves and resolves cruciform DNA. This chain is Holliday junction branch migration complex subunit RuvB, found in Geotalea uraniireducens (strain Rf4) (Geobacter uraniireducens).